A 227-amino-acid chain; its full sequence is PKHD-type hydroxylase BamMC406_5004 (227 aa).

The Fe2OG dioxygenase domain maps to 80–179; it reads QVYPPLFNRY…RVASFFWVQS (100 aa). His-98, Asp-100, and His-160 together coordinate Fe cation. Arg-170 provides a ligand contact to 2-oxoglutarate.

Fe(2+) serves as cofactor. L-ascorbate is required as a cofactor.

This Burkholderia ambifaria (strain MC40-6) protein is PKHD-type hydroxylase BamMC406_5004.